The sequence spans 400 residues: Acetate kinase (400 aa).

Mg(2+) is bound at residue Asn10. Lys17 serves as a coordination point for ATP. Arg91 is a binding site for substrate. The active-site Proton donor/acceptor is Asp150. ATP-binding positions include 210–214 (HLGNG), 285–287 (DCR), and 333–337 (GIGEN). Residue Glu387 participates in Mg(2+) binding.

Belongs to the acetokinase family. Homodimer. Requires Mg(2+) as cofactor. The cofactor is Mn(2+).

It is found in the cytoplasm. The enzyme catalyses acetate + ATP = acetyl phosphate + ADP. It functions in the pathway metabolic intermediate biosynthesis; acetyl-CoA biosynthesis; acetyl-CoA from acetate: step 1/2. Its function is as follows. Catalyzes the formation of acetyl phosphate from acetate and ATP. Can also catalyze the reverse reaction. The chain is Acetate kinase from Yersinia pseudotuberculosis serotype I (strain IP32953).